The chain runs to 156 residues: ATP synthase subunit b (156 aa).

The chain crosses the membrane as a helical span at residues 13–33 (AFIIFVWCCMKFVWPPLMAAI).

The protein belongs to the ATPase B chain family. In terms of assembly, F-type ATPases have 2 components, F(1) - the catalytic core - and F(0) - the membrane proton channel. F(1) has five subunits: alpha(3), beta(3), gamma(1), delta(1), epsilon(1). F(0) has three main subunits: a(1), b(2) and c(10-14). The alpha and beta chains form an alternating ring which encloses part of the gamma chain. F(1) is attached to F(0) by a central stalk formed by the gamma and epsilon chains, while a peripheral stalk is formed by the delta and b chains.

Its subcellular location is the cell inner membrane. In terms of biological role, f(1)F(0) ATP synthase produces ATP from ADP in the presence of a proton or sodium gradient. F-type ATPases consist of two structural domains, F(1) containing the extramembraneous catalytic core and F(0) containing the membrane proton channel, linked together by a central stalk and a peripheral stalk. During catalysis, ATP synthesis in the catalytic domain of F(1) is coupled via a rotary mechanism of the central stalk subunits to proton translocation. Functionally, component of the F(0) channel, it forms part of the peripheral stalk, linking F(1) to F(0). The protein is ATP synthase subunit b of Aeromonas salmonicida (strain A449).